Consider the following 537-residue polypeptide: Protein disulfide isomerase-like 1-5 (537 aa).

Positions 1–29 (MSLIPKPISKVSTFTFILLILLSFTIIIA) are cleaved as a signal peptide. In terms of domain architecture, Thioredoxin 1 spans 58–184 (LQEDRPEQQS…IVIWVQKKTG (127 aa)). Catalysis depends on cysteine 106, which acts as the Nucleophile. Residues asparagine 160, asparagine 364, and asparagine 416 are each glycosylated (N-linked (GlcNAc...) asparagine). The Thioredoxin 2 domain maps to 380-526 (LLESDPSPNS…IAVFINEELL (147 aa)). Catalysis depends on nucleophile residues cysteine 447 and cysteine 450. Residues cysteine 447 and cysteine 450 are joined by a disulfide bond. An N-linked (GlcNAc...) asparagine glycan is attached at asparagine 530. Positions 534–537 (KDEL) match the Prevents secretion from ER motif.

It belongs to the protein disulfide isomerase family. As to expression, widely expressed.

The protein resides in the endoplasmic reticulum lumen. It carries out the reaction Catalyzes the rearrangement of -S-S- bonds in proteins.. Acts as a protein-folding catalyst that interacts with nascent polypeptides to catalyze the formation, isomerization, and reduction or oxidation of disulfide bonds. This Arabidopsis thaliana (Mouse-ear cress) protein is Protein disulfide isomerase-like 1-5 (PDIL1-5).